Here is a 551-residue protein sequence, read N- to C-terminus: Glucose-6-phosphate isomerase (551 aa).

The active-site Proton donor is the Glu-356. Residues His-387 and Lys-515 contribute to the active site.

It belongs to the GPI family.

It localises to the cytoplasm. It carries out the reaction alpha-D-glucose 6-phosphate = beta-D-fructose 6-phosphate. The protein operates within carbohydrate biosynthesis; gluconeogenesis. It participates in carbohydrate degradation; glycolysis; D-glyceraldehyde 3-phosphate and glycerone phosphate from D-glucose: step 2/4. In terms of biological role, catalyzes the reversible isomerization of glucose-6-phosphate to fructose-6-phosphate. This is Glucose-6-phosphate isomerase from Blochmanniella pennsylvanica (strain BPEN).